The following is a 140-amino-acid chain: L-fucose mutarotase (140 aa).

His-22 serves as the catalytic Proton donor. Residues Asp-30, Arg-107, and 129 to 131 (YGN) each bind substrate.

The protein belongs to the RbsD / FucU family. FucU mutarotase subfamily. In terms of assembly, homodecamer.

The protein localises to the cytoplasm. It catalyses the reaction alpha-L-fucose = beta-L-fucose. The protein operates within carbohydrate metabolism; L-fucose metabolism. Involved in the anomeric conversion of L-fucose. This is L-fucose mutarotase from Salmonella arizonae (strain ATCC BAA-731 / CDC346-86 / RSK2980).